The sequence spans 346 residues: 4-hydroxy-2-oxovalerate aldolase 2 (346 aa).

Residues 8–258 (VTLVDTTLRD…HTGVELFPLI (251 aa)) form the Pyruvate carboxyltransferase domain. Substrate contacts are provided by residues 16 to 17 (RD), S170, and H197. D17 is a Mn(2+) binding site. 2 residues coordinate Mn(2+): H197 and H199. Y288 lines the substrate pocket.

It belongs to the 4-hydroxy-2-oxovalerate aldolase family.

The enzyme catalyses (S)-4-hydroxy-2-oxopentanoate = acetaldehyde + pyruvate. The polypeptide is 4-hydroxy-2-oxovalerate aldolase 2 (Nocardia farcinica (strain IFM 10152)).